A 256-amino-acid polypeptide reads, in one-letter code: Alcohol dehydrogenase (256 aa).

12-35 (FVAGLGGIGLDTSKELLKRDLKNL) contributes to the NAD(+) binding site. Ser140 is a substrate binding site. Tyr153 acts as the Proton acceptor in catalysis.

The protein belongs to the short-chain dehydrogenases/reductases (SDR) family. Homodimer.

It catalyses the reaction a primary alcohol + NAD(+) = an aldehyde + NADH + H(+). The enzyme catalyses a secondary alcohol + NAD(+) = a ketone + NADH + H(+). In Drosophila sechellia (Fruit fly), this protein is Alcohol dehydrogenase (Adh).